The sequence spans 552 residues: MHCERFLCILRIIGTTLFGVSLLLGITAAYIVGYQFIQTDNYYFSFGLYGAFLASHLIIQSLFAFLEHRKMKKSLETPIKLNKTVALCIAAYQEDPDYLRKCLQSVKRLTYPGIKVVMVIDGNSEDDLYMMDIFSEVMGRDKSATYIWKNNFHEKGPGETDESHKESSQHVTQLVLSNKSICIMQKWGGKREVMYTAFRALGRSVDYVQVCDSDTMLDPASSVEMVKVLEEDPMVGGVGGDVQILNKYDSWISFLSSVRYWMAFNIERACQSYFGCVQCISGPLGMYRNSLLHEFVEDWYNQEFMGNQCSFGDDRHLTNRVLSLGYATKYTARSKCLTETPIEYLRWLNQQTRWSKSYFREWLYNAMWFHKHHLWMTYEAIITGFFPFFLIATVIQLFYRGKIWNILLFLLTVQLVGLIKSSFASCLRGNIVMVFMSLYSVLYMSSLLPAKMFAIATINKAGWGTSGRKTIVVNFIGLIPVSVWFTILLGGVIFTIYKESKRPFSESKQTVLIVGTLLYACYWVMLLTLYVVLINKCGRRKKGQQYDMVLDV.

Topologically, residues 1–11 (MHCERFLCILR) are cytoplasmic. Residues 12 to 32 (IIGTTLFGVSLLLGITAAYIV) traverse the membrane as a helical segment. At 33 to 45 (GYQFIQTDNYYFS) the chain is on the extracellular side. The chain crosses the membrane as a helical span at residues 46–66 (FGLYGAFLASHLIIQSLFAFL). The Cytoplasmic segment spans residues 67–374 (EHRKMKKSLE…NAMWFHKHHL (308 aa)). T110 carries the post-translational modification Phosphothreonine. K190 is covalently cross-linked (Glycyl lysine isopeptide (Lys-Gly) (interchain with G-Cter in ubiquitin)). S221 is a glycosylation site (O-linked (GlcNAc) serine). T328 carries the post-translational modification Phosphothreonine. The chain crosses the membrane as a helical span at residues 375–395 (WMTYEAIITGFFPFFLIATVI). Residues 396 to 402 (QLFYRGK) are Extracellular-facing. A helical membrane pass occupies residues 403–423 (IWNILLFLLTVQLVGLIKSSF). Residues 424-429 (ASCLRG) are Cytoplasmic-facing. The chain crosses the membrane as a helical span at residues 430-450 (NIVMVFMSLYSVLYMSSLLPA). At 451 to 475 (KMFAIATINKAGWGTSGRKTIVVNF) the chain is on the extracellular side. Residues 476–496 (IGLIPVSVWFTILLGGVIFTI) form a helical membrane-spanning segment. The Cytoplasmic segment spans residues 497–510 (YKESKRPFSESKQT). The chain crosses the membrane as a helical span at residues 511-531 (VLIVGTLLYACYWVMLLTLYV). At 532–552 (VLINKCGRRKKGQQYDMVLDV) the chain is on the extracellular side.

This sequence belongs to the NodC/HAS family. Homodimer; dimerization promotes enzymatic activity. Forms heterodimer with HAS3. Forms heterodimer with HAS1. The cofactor is Mg(2+). Post-translationally, phosphorylation at Thr-328 is essential for hyaluronan synthase activity. Phosphorylation at Thr-110 is required for transport from ER to Golgi. In terms of processing, O-GlcNAcylation at Ser-221 increases the stability of HAS2 and plasma membrane localization. Ubiquitination at Lys-190; this ubiquitination is essential for hyaluronan synthase activity and homo- or hetero-oligomerization. Can also be poly-ubiquitinated. Deubiquitinated by USP17 and USP4. USP17 efficiently removes 'Lys-63'- and 'Lys-48'-linked polyubiquitin chains, whereas USP4 preferentially removes monoubiquitination and, partially, both 'Lys-63'- and 'Lys-48'-linked polyubiquitin chain. Expressed in fibroblasts.

It is found in the cell membrane. The protein resides in the endoplasmic reticulum membrane. Its subcellular location is the vesicle. It localises to the golgi apparatus membrane. The protein localises to the lysosome. It carries out the reaction [hyaluronan](n) + UDP-N-acetyl-alpha-D-glucosamine = N-acetyl-beta-D-glucosaminyl-(1-&gt;4)-[hyaluronan](n) + UDP + H(+). It catalyses the reaction N-acetyl-beta-D-glucosaminyl-(1-&gt;4)-[hyaluronan](n) + UDP-alpha-D-glucuronate = [hyaluronan](n+1) + UDP + H(+). The protein operates within glycan biosynthesis; hyaluronan biosynthesis. Its activity is regulated as follows. Regulated by several post-translational modifications such as ubiquitination/deubiquitination, phosphorylation and O-GlcNAcylation. The enzymatic activity depends on the availability of UDP-GlcUA and UDP-GlcNAc. In terms of biological role, catalyzes the addition of GlcNAc or GlcUA monosaccharides to the nascent hyaluronan polymer. Therefore, it is essential to hyaluronan synthesis a major component of most extracellular matrices that has a structural role in tissues architectures and regulates cell adhesion, migration and differentiation. This is one of three isoenzymes responsible for cellular hyaluronan synthesis and it is particularly responsible for the synthesis of high molecular mass hyaluronan. The polypeptide is Hyaluronan synthase 2 (Homo sapiens (Human)).